Consider the following 378-residue polypeptide: 8-demethyl-8-alpha-L-rhamnosyl tetracenomycin-C 2'-O-methyltransferase (378 aa).

Residues 195 to 201 (EIGVGGY), Ser210, Asp227, 245 to 246 (DQ), and Asp268 each bind S-adenosyl-L-methionine. Asp268 is a binding site for Mg(2+). The active-site Proton acceptor is His271. Mg(2+) contacts are provided by Glu296 and Asp297.

The protein belongs to the methyltransferase OleY/MycE family. Requires Mg(2+) as cofactor.

The catalysed reaction is 8-demethyl-8-alpha-L-rhamnosyl-tetracenomycin C + S-adenosyl-L-methionine = 8-demethyl-8-(2-O-methyl-alpha-L-rhamnosyl)-tetracenomycin C + S-adenosyl-L-homocysteine + H(+). Its pathway is antibiotic biosynthesis. In terms of biological role, O-methyltransferase involved in the biosynthesis of the permethylated L-rhamnose moiety of elloramycin, an antitumor polyketide. Mediates the methylation of the hydroxy groups at the 2'-position after the sugar moiety has been attached to the aglycon. This Streptomyces olivaceus protein is 8-demethyl-8-alpha-L-rhamnosyl tetracenomycin-C 2'-O-methyltransferase.